The sequence spans 206 residues: Guanylate kinase (206 aa).

Residues 3–183 (GNLYILSAPS…ALTELKSILT (181 aa)) enclose the Guanylate kinase-like domain. Position 10–17 (10–17 (APSGAGKS)) interacts with ATP.

Belongs to the guanylate kinase family.

It is found in the cytoplasm. The enzyme catalyses GMP + ATP = GDP + ADP. Essential for recycling GMP and indirectly, cGMP. The chain is Guanylate kinase from Haemophilus ducreyi (strain 35000HP / ATCC 700724).